The chain runs to 400 residues: MKILVLNCGSSSIKYKLFDMTSGEVMAQGGIEKIGLPGAFLKLTDKDGKKVVIEREIPGHQEGIEFILSVLTDATYGCIKDYKEIDAVGHRVVHGGEEFASSVLINQDVINKVIECSDLAPLHNPANLKGVRAMEALIPGIPQVAVFDTAFHQTMPDYAYMYGLPYEMYKKYGVRRYGFHGTSHRYVSRRACEILGVPYEDQKIITAHVGNGGSITAIKNGKSVDTSMGLTPVEGLLMGTRCGDVDAGALSFIMDKEGMDGAGLSDLINKRSGVAGLSGISSDMREIEAAVAAGNPRAIMTLNVYNYRIKKYIGAYAAAMGGCDILVWTGGVGENQWATRRAVCENMEYMGMKIDVEKNEGMRGEEMVISTPDSKVTIIVVPTDEEFMIAADTLEILDKK.

N7 contacts Mg(2+). K14 contacts ATP. R91 is a substrate binding site. The Proton donor/acceptor role is filled by D148. Residues 208 to 212 (HVGNG), 283 to 285 (DMR), and 331 to 335 (GVGEN) contribute to the ATP site. E385 is a binding site for Mg(2+).

The protein belongs to the acetokinase family. Homodimer. Mg(2+) is required as a cofactor. Mn(2+) serves as cofactor.

The protein localises to the cytoplasm. The enzyme catalyses acetate + ATP = acetyl phosphate + ADP. It functions in the pathway metabolic intermediate biosynthesis; acetyl-CoA biosynthesis; acetyl-CoA from acetate: step 1/2. In terms of biological role, catalyzes the formation of acetyl phosphate from acetate and ATP. Can also catalyze the reverse reaction. This chain is Acetate kinase, found in Parabacteroides distasonis (strain ATCC 8503 / DSM 20701 / CIP 104284 / JCM 5825 / NCTC 11152).